The sequence spans 188 residues: MKQLLDFIPLVVFFAAYKLYDIYIASGALIAATALSLAVTWMMYRKIEKMTLVTFAMVVVFGSLTLVFHNDLFIKWKVTIIYALFAVALLVSQFVMKQTLIQKMLGKELTLPQSVWGKLNFAWAMFFLVCGLVNIYIAFWLPQSVWVNFKVFGLTGVTLLFTLICGVYIYRHLPGDQEKPEEEKSEQP.

Helical transmembrane passes span 22 to 42 (IYIASGALIAATALSLAVTWM), 50 to 70 (MTLVTFAMVVVFGSLTLVFHN), 72 to 92 (LFIKWKVTIIYALFAVALLVS), 121 to 141 (FAWAMFFLVCGLVNIYIAFWL), and 149 to 169 (FKVFGLTGVTLLFTLICGVYI).

The protein belongs to the YciB family.

It localises to the cell inner membrane. Functionally, plays a role in cell envelope biogenesis, maintenance of cell envelope integrity and membrane homeostasis. This chain is Inner membrane-spanning protein YciB, found in Pectobacterium carotovorum subsp. carotovorum (strain PC1).